Consider the following 509-residue polypeptide: Photosystem II CP47 reaction center protein (509 aa).

Transmembrane regions (helical) follow at residues 21–36 (AVHL…WAGS), 101–115 (IVLS…IWHW), 140–156 (GIHL…FGAF), 203–218 (IAAG…FHLT), 237–252 (VLSS…AFIT), and 457–472 (NFAL…HGSR).

It belongs to the PsbB/PsbC family. PsbB subfamily. PSII is composed of 1 copy each of membrane proteins PsbA, PsbB, PsbC, PsbD, PsbE, PsbF, PsbH, PsbI, PsbJ, PsbK, PsbL, PsbM, PsbT, PsbX, PsbY, PsbZ, Psb30/Ycf12, at least 3 peripheral proteins of the oxygen-evolving complex and a large number of cofactors. It forms dimeric complexes. It depends on Binds multiple chlorophylls. PSII binds additional chlorophylls, carotenoids and specific lipids. as a cofactor.

The protein localises to the plastid. Its subcellular location is the chloroplast thylakoid membrane. One of the components of the core complex of photosystem II (PSII). It binds chlorophyll and helps catalyze the primary light-induced photochemical processes of PSII. PSII is a light-driven water:plastoquinone oxidoreductase, using light energy to abstract electrons from H(2)O, generating O(2) and a proton gradient subsequently used for ATP formation. The polypeptide is Photosystem II CP47 reaction center protein (Porphyra purpurea (Red seaweed)).